Reading from the N-terminus, the 857-residue chain is Leucine--tRNA ligase (857 aa).

Positions 42-52 (PYPSGNLHMGH) match the 'HIGH' region motif. The short motif at 615–619 (KMSKS) is the 'KMSKS' region element. An ATP-binding site is contributed by Lys-618.

This sequence belongs to the class-I aminoacyl-tRNA synthetase family.

It is found in the cytoplasm. It catalyses the reaction tRNA(Leu) + L-leucine + ATP = L-leucyl-tRNA(Leu) + AMP + diphosphate. The protein is Leucine--tRNA ligase of Thermosynechococcus vestitus (strain NIES-2133 / IAM M-273 / BP-1).